The chain runs to 400 residues: NADH dehydrogenase-like protein Rv1812c (400 aa).

The protein belongs to the NADH dehydrogenase family. Requires FAD as cofactor.

The chain is NADH dehydrogenase-like protein Rv1812c from Mycobacterium tuberculosis (strain ATCC 25618 / H37Rv).